The following is a 968-amino-acid chain: RNA polymerase-associated protein RapA (968 aa).

A Helicase ATP-binding domain is found at 164–334 (DVGRRHAPRV…FARLRLLDPN (171 aa)). Residue 177–184 (DEVGLGKT) coordinates ATP. The short motif at 280–283 (DEAH) is the DEAH box element. Residues 490 to 662 (RVEWLMGYLT…YLASPDQTEG (173 aa)) enclose the Helicase C-terminal domain.

Belongs to the SNF2/RAD54 helicase family. RapA subfamily. As to quaternary structure, interacts with the RNAP. Has a higher affinity for the core RNAP than for the holoenzyme. Its ATPase activity is stimulated by binding to RNAP.

Functionally, transcription regulator that activates transcription by stimulating RNA polymerase (RNAP) recycling in case of stress conditions such as supercoiled DNA or high salt concentrations. Probably acts by releasing the RNAP, when it is trapped or immobilized on tightly supercoiled DNA. Does not activate transcription on linear DNA. Probably not involved in DNA repair. In Escherichia coli O1:K1 / APEC, this protein is RNA polymerase-associated protein RapA.